Reading from the N-terminus, the 404-residue chain is Cysteine desulfurase IscS (404 aa).

Pyridoxal 5'-phosphate contacts are provided by residues 75–76 (AT), Asn-155, Gln-183, and 203–205 (SGH). Position 206 is an N6-(pyridoxal phosphate)lysine (Lys-206). Residue Thr-243 participates in pyridoxal 5'-phosphate binding. Catalysis depends on Cys-328, which acts as the Cysteine persulfide intermediate. [2Fe-2S] cluster is bound at residue Cys-328.

The protein belongs to the class-V pyridoxal-phosphate-dependent aminotransferase family. NifS/IscS subfamily. In terms of assembly, homodimer. Forms a heterotetramer with IscU, interacts with other sulfur acceptors. Pyridoxal 5'-phosphate serves as cofactor.

The protein resides in the cytoplasm. The catalysed reaction is (sulfur carrier)-H + L-cysteine = (sulfur carrier)-SH + L-alanine. It participates in cofactor biosynthesis; iron-sulfur cluster biosynthesis. In terms of biological role, master enzyme that delivers sulfur to a number of partners involved in Fe-S cluster assembly, tRNA modification or cofactor biosynthesis. Catalyzes the removal of elemental sulfur and selenium atoms from cysteine and selenocysteine to produce alanine. Functions as a sulfur delivery protein for Fe-S cluster synthesis onto IscU, an Fe-S scaffold assembly protein, as well as other S acceptor proteins. Also functions as a selenium delivery protein in the pathway for the biosynthesis of selenophosphate. This is Cysteine desulfurase IscS from Salmonella gallinarum (strain 287/91 / NCTC 13346).